Consider the following 221-residue polypeptide: Stromal cell-derived factor 2-like protein 1 (221 aa).

A signal peptide spans Met1–Ala28. 3 consecutive MIR domains span residues Ala33–Gly87, Gly95–Ser150, and Gly151–Gly205. At Ser215 the chain carries Phosphoserine. A Prevents secretion from ER motif is present at residues His218–Leu221.

In terms of tissue distribution, ubiquitously expressed with high expression in the testis, ovary, uterus, and low expression in heart and skeletal muscle.

Its subcellular location is the endoplasmic reticulum lumen. The sequence is that of Stromal cell-derived factor 2-like protein 1 (Sdf2l1) from Mus musculus (Mouse).